A 163-amino-acid polypeptide reads, in one-letter code: MFAVIKTGGKQYHVVANQVVKVEKVIGNAGDVVEFNDILMVGQEDNTIIGAPVVADALVTAEIIKQARARKVISFKKRRRQNSKCTRGHRQEVTILRILEILTGGLKPKRAVAKPIKEEAAVLKETTKKTKATVSIKKTAKKPSEKKSAPQKKAAVVSNNKED.

The segment at 124 to 163 is disordered; that stretch reads KETTKKTKATVSIKKTAKKPSEKKSAPQKKAAVVSNNKED.

The protein belongs to the bacterial ribosomal protein bL21 family. In terms of assembly, part of the 50S ribosomal subunit. Contacts protein L20.

Functionally, this protein binds to 23S rRNA in the presence of protein L20. This is Large ribosomal subunit protein bL21 from Bartonella quintana (strain Toulouse) (Rochalimaea quintana).